Reading from the N-terminus, the 287-residue chain is Acetylglutamate kinase (287 aa).

Substrate is bound by residues 64–65, arginine 86, and asparagine 185; that span reads GG.

The protein belongs to the acetylglutamate kinase family. ArgB subfamily.

Its subcellular location is the cytoplasm. It catalyses the reaction N-acetyl-L-glutamate + ATP = N-acetyl-L-glutamyl 5-phosphate + ADP. The protein operates within amino-acid biosynthesis; L-arginine biosynthesis; N(2)-acetyl-L-ornithine from L-glutamate: step 2/4. Functionally, catalyzes the ATP-dependent phosphorylation of N-acetyl-L-glutamate. This chain is Acetylglutamate kinase, found in Hydrogenobaculum sp. (strain Y04AAS1).